We begin with the raw amino-acid sequence, 234 residues long: KNMITGAAQMDGAILVVSAADGPMPQTREHILLAKRVGVPNIVVFLNKQDMVDDDELLELVELEVRELLTEYGFDGDSIPIVAGSALQAVDAMIAKGTTKQSENEWVDKIHKLMAEVDAFIPTPERIIDKPFLMAIEDVFSITGRGTVATGRIERGKVKVGEIEIVGIRDNRQSIVTGVEMFRKLLDEGMAGDNVGVLLRGIQREDLERGMVLAKSRSITPHTKFESEVYVLKK.

The tr-type G domain maps to 1–125 (KNMITGAAQM…EVDAFIPTPE (125 aa)). 47–50 (NKQD) is a GTP binding site.

This sequence belongs to the TRAFAC class translation factor GTPase superfamily. Classic translation factor GTPase family. EF-Tu/EF-1A subfamily. In terms of assembly, monomer.

Its subcellular location is the cytoplasm. It catalyses the reaction GTP + H2O = GDP + phosphate + H(+). Its function is as follows. GTP hydrolase that promotes the GTP-dependent binding of aminoacyl-tRNA to the A-site of ribosomes during protein biosynthesis. In Prochlorothrix hollandica, this protein is Elongation factor Tu (tufA).